The following is a 202-amino-acid chain: Putative pituitary tumor-transforming gene 3 protein (202 aa).

The D-box motif lies at 61–64; it reads RKAL. The SH3-binding motif lies at 163–173; the sequence is PPSPLKMPSPP.

It belongs to the securin family.

The protein resides in the cytoplasm. It is found in the nucleus. The protein is Putative pituitary tumor-transforming gene 3 protein (PTTG3) of Pan troglodytes (Chimpanzee).